Reading from the N-terminus, the 609-residue chain is MNMMTSSILMILILLTTPIIISMTNLPKLIDFPSYATSSIKFSFLLSLLPLLLFFHHNTEYMITNWHWLTINSIKLTMSFKIDYFSILFLSVALFVTWSIMQFSSWYMHSDPHINRFIKYLMMFLITMLILTSANNLFQLFIGWEGVGIMSFLLIGWWYGRADANTAALQAILYNRVGDIGFILAMTWFCLNMNSWELQQIFLTNTNNLVPLTGLLIAATGKSAQFGLHPWLPSAMEGPTPVSALLHSSTMVVAGIFLMIRFHPLTSNNSTIMTAMLCLGAITTLFTAICALTQNDIKKIVAFSTSSQLGLMMVTLGINQPYLAFLHICTHAFFKAMLFMCSGSIIHSLNDEQDIRKMGNMMKAMPFTSSCLIIGSLALTGMPFLTGFYSKDLIIEAINTCNTNAWALMITLIATSMTAVYSMRIIYFVTMTKPRYSPLITINENNPNLINPIKRLALGSILAGFLISLNIPPTNIQILTMPWHLKMTALLITILGFAIALELNNLTLNLSMSKPTKLSSFSTSLGYYPPIMHRIIPQKTLNSSYKLSLNLLDLIWLEKTIPKSTSITQTQLSKMMSNQKGLIKLYFLSFLITISLIFILHTLNPEWFQ.

A run of 15 helical transmembrane segments spans residues 6–26 (SSIL…MTNL), 35–55 (YATS…LLFF), 84–104 (YFSI…MQFS), 116–138 (RFIK…NNLF), 140–160 (LFIG…WWYG), 171–191 (AILY…WFCL), 240–260 (TPVS…FLMI), 272–292 (IMTA…ICAL), 300–319 (IVAF…LGIN), 330–350 (THAF…HSLN), 365–385 (MPFT…MPFL), 409–429 (MITL…IYFV), 456–476 (LALG…PTNI), 481–501 (MPWH…AIAL), and 581–601 (GLIK…FILH).

The protein belongs to the complex I subunit 5 family. Core subunit of respiratory chain NADH dehydrogenase (Complex I) which is composed of 45 different subunits.

The protein resides in the mitochondrion inner membrane. The enzyme catalyses a ubiquinone + NADH + 5 H(+)(in) = a ubiquinol + NAD(+) + 4 H(+)(out). Core subunit of the mitochondrial membrane respiratory chain NADH dehydrogenase (Complex I) which catalyzes electron transfer from NADH through the respiratory chain, using ubiquinone as an electron acceptor. Essential for the catalytic activity and assembly of complex I. This Rattus norvegicus (Rat) protein is NADH-ubiquinone oxidoreductase chain 5.